We begin with the raw amino-acid sequence, 634 residues long: MVRLVLPNPGLDTRILSLAELETIEQEEASSRPKWDNKAQYLLTCVGFCVGLGNVWRFPYLCQSHGGGAFMIPFLILLVLEGIPLLHLEFAIGQRLRRGSLGVWSSIHPALKGVGLTSMLVSFVVGLYYNTIISWIMWYLFNSFQEPLPWSECPLNENQTGYVDECARSSPVDYFWYRETLNISTSISDSGSIQWRMLLCLACAWSVLYMCTIRGIETTGKVVYITSTLPYVVLTIFLIRGLTLKGATKGIIYLFTPNVTELANPVTWLDAGAQVFFSFSLAFGGLISFSSYNSVHNNCERDSVIVSIINGFTSVYVAIVIYSIIGFRATQRYDDCFSTNILTLINGFDLPEGNVTQENFVEMQRQCNASNPAAYAQLVFQTCDINSFLSEGVEGTGLAFIVFTEAITKMPVSPLWSVLFFIMLFCLGLSSMFGNMEGVVVPLQDLKVIPPKWPKELLTGLICLGTFLIGFIFTLNSGQYWLSLLDSYAVSIPLLIIAFCEMFSVVYVYGVDRFNKDIEFMIGHKPNIFWQVTWRVVSPLLMLIILVFFFVVQVSQELTYSIWNPGYEEFPKSQKISHPNWVYAVVVIVAGVPSLTIPSYAIYKLIRNCCQKPGDRQGLVSTLSTASMNGDLKY.

Topologically, residues 1-41 (MVRLVLPNPGLDTRILSLAELETIEQEEASSRPKWDNKAQY) are cytoplasmic. Ser-17 carries the post-translational modification Phosphoserine. Residues 42-62 (LLTCVGFCVGLGNVWRFPYLC) form a helical membrane-spanning segment. Residues 63-65 (QSH) lie on the Extracellular side of the membrane. A helical membrane pass occupies residues 66–86 (GGGAFMIPFLILLVLEGIPLL). Topologically, residues 87–120 (HLEFAIGQRLRRGSLGVWSSIHPALKGVGLTSML) are cytoplasmic. The chain crosses the membrane as a helical span at residues 121 to 141 (VSFVVGLYYNTIISWIMWYLF). Topologically, residues 142–192 (NSFQEPLPWSECPLNENQTGYVDECARSSPVDYFWYRETLNISTSISDSGS) are extracellular. Residues Asn-158 and Asn-182 are each glycosylated (N-linked (GlcNAc...) asparagine). A helical transmembrane segment spans residues 193-213 (IQWRMLLCLACAWSVLYMCTI). At 214-221 (RGIETTGK) the chain is on the cytoplasmic side. The helical transmembrane segment at 222 to 242 (VVYITSTLPYVVLTIFLIRGL) threads the bilayer. The Extracellular segment spans residues 243-268 (TLKGATKGIIYLFTPNVTELANPVTW). Asn-258 carries an N-linked (GlcNAc...) asparagine glycan. The helical transmembrane segment at 269 to 289 (LDAGAQVFFSFSLAFGGLISF) threads the bilayer. Topologically, residues 290–304 (SSYNSVHNNCERDSV) are cytoplasmic. The helical transmembrane segment at 305 to 325 (IVSIINGFTSVYVAIVIYSII) threads the bilayer. Residues 326–413 (GFRATQRYDD…TEAITKMPVS (88 aa)) are Extracellular-facing. N-linked (GlcNAc...) asparagine glycosylation is found at Asn-354 and Asn-368. Residues 414 to 434 (PLWSVLFFIMLFCLGLSSMFG) traverse the membrane as a helical segment. The Cytoplasmic segment spans residues 435–456 (NMEGVVVPLQDLKVIPPKWPKE). Residues 457 to 477 (LLTGLICLGTFLIGFIFTLNS) form a helical membrane-spanning segment. Topologically, residues 478 to 487 (GQYWLSLLDS) are extracellular. Residues 488–508 (YAVSIPLLIIAFCEMFSVVYV) traverse the membrane as a helical segment. Residues 509 to 531 (YGVDRFNKDIEFMIGHKPNIFWQ) lie on the Cytoplasmic side of the membrane. Residues 532–552 (VTWRVVSPLLMLIILVFFFVV) form a helical membrane-spanning segment. Residues 553–581 (QVSQELTYSIWNPGYEEFPKSQKISHPNW) are Extracellular-facing. The chain crosses the membrane as a helical span at residues 582–602 (VYAVVVIVAGVPSLTIPSYAI). At 603-634 (YKLIRNCCQKPGDRQGLVSTLSTASMNGDLKY) the chain is on the cytoplasmic side. Ser-627 carries the phosphoserine modification.

This sequence belongs to the sodium:neurotransmitter symporter (SNF) (TC 2.A.22) family. SLC6A19 subfamily. Interacts in a tissue-specific manner with ACE2 in small intestine and with CLTRN in the kidney. Interacts with CLTRN; this interaction is required for trafficking of SLC6A19 to the plasma membrane and for its catalytic activation in kidneys. Interacts with ACE2; this interaction is required for trafficking of SLC6A19 to the plasma membrane and for its catalytic activation in intestine. Interacts with ANPEP; the interaction positively regulates its amino acid transporter activity.

Its subcellular location is the membrane. It catalyses the reaction L-alanine(in) + Na(+)(in) = L-alanine(out) + Na(+)(out). It carries out the reaction L-cysteine(in) + Na(+)(in) = L-cysteine(out) + Na(+)(out). The catalysed reaction is L-glutamine(in) + Na(+)(in) = L-glutamine(out) + Na(+)(out). The enzyme catalyses glycine(in) + Na(+)(in) = glycine(out) + Na(+)(out). It catalyses the reaction L-isoleucine(in) + Na(+)(in) = L-isoleucine(out) + Na(+)(out). It carries out the reaction L-leucine(in) + Na(+)(in) = L-leucine(out) + Na(+)(out). The catalysed reaction is L-methionine(in) + Na(+)(in) = L-methionine(out) + Na(+)(out). The enzyme catalyses L-phenylalanine(in) + Na(+)(in) = L-phenylalanine(out) + Na(+)(out). It catalyses the reaction L-serine(in) + Na(+)(in) = L-serine(out) + Na(+)(out). It carries out the reaction L-tryptophan(in) + Na(+)(in) = L-tryptophan(out) + Na(+)(out). The catalysed reaction is L-tyrosine(in) + Na(+)(in) = L-tyrosine(out) + Na(+)(out). The enzyme catalyses L-valine(in) + Na(+)(in) = L-valine(out) + Na(+)(out). In terms of biological role, transporter that mediates resorption of neutral amino acids across the apical membrane of renal and intestinal epithelial cells. This uptake is sodium-dependent and chloride-independent. Requires CLTRN in kidney or ACE2 in intestine for cell surface expression and amino acid transporter activity. The polypeptide is Sodium-dependent neutral amino acid transporter B(0)AT1 (SLC6A19) (Pongo abelii (Sumatran orangutan)).